The primary structure comprises 392 residues: L-rhamnonate dehydratase (392 aa).

Residues His22 and Arg48 each contribute to the substrate site. Residues Asp214, Glu240, and Glu268 each contribute to the Mg(2+) site. Residue His318 is the Proton acceptor of the active site. A substrate-binding site is contributed by Glu338.

This sequence belongs to the mandelate racemase/muconate lactonizing enzyme family. RhamD subfamily. As to quaternary structure, homooctamer; tetramer of dimers. The cofactor is Mg(2+).

The catalysed reaction is L-rhamnonate = 2-dehydro-3-deoxy-L-rhamnonate + H2O. Catalyzes the dehydration of L-rhamnonate to 2-keto-3-deoxy-L-rhamnonate (KDR). In Paraburkholderia xenovorans (strain LB400), this protein is L-rhamnonate dehydratase.